A 181-amino-acid chain; its full sequence is Oligoribonuclease (181 aa).

One can recognise an Exonuclease domain in the interval 8-171 (LIWVDLEMTG…DDIHDSIAEL (164 aa)). Y129 is a catalytic residue.

It belongs to the oligoribonuclease family.

It is found in the cytoplasm. Functionally, 3'-to-5' exoribonuclease specific for small oligoribonucleotides. This is Oligoribonuclease from Photobacterium profundum (strain SS9).